We begin with the raw amino-acid sequence, 378 residues long: Chaperone protein DnaJ (378 aa).

Residues 5–69 (EYYDRLGVSK…QKRAAYDQYG (65 aa)) form the J domain. The segment at 134-216 (GVEKEVSYNR…CHGTGHEKQA (83 aa)) adopts a CR-type zinc-finger fold. Zn(2+) contacts are provided by Cys-147, Cys-150, Cys-164, Cys-167, Cys-190, Cys-193, Cys-204, and Cys-207. 4 CXXCXGXG motif repeats span residues 147 to 154 (CGTCLGSG), 164 to 171 (CRKCHGSG), 190 to 197 (CDICHGSG), and 204 to 211 (CQTCHGTG).

Belongs to the DnaJ family. In terms of assembly, homodimer. It depends on Zn(2+) as a cofactor.

It localises to the cytoplasm. In terms of biological role, participates actively in the response to hyperosmotic and heat shock by preventing the aggregation of stress-denatured proteins and by disaggregating proteins, also in an autonomous, DnaK-independent fashion. Unfolded proteins bind initially to DnaJ; upon interaction with the DnaJ-bound protein, DnaK hydrolyzes its bound ATP, resulting in the formation of a stable complex. GrpE releases ADP from DnaK; ATP binding to DnaK triggers the release of the substrate protein, thus completing the reaction cycle. Several rounds of ATP-dependent interactions between DnaJ, DnaK and GrpE are required for fully efficient folding. Also involved, together with DnaK and GrpE, in the DNA replication of plasmids through activation of initiation proteins. This chain is Chaperone protein DnaJ, found in Streptococcus pyogenes serotype M1.